The chain runs to 644 residues: DNA gyrase subunit B (644 aa).

The region spanning 429–543 (CEIFLVEGDS…AGYVYIAQPP (115 aa)) is the Toprim domain. Mg(2+) contacts are provided by Glu435, Asp508, and Asp510.

It belongs to the type II topoisomerase GyrB family. In terms of assembly, heterotetramer, composed of two GyrA and two GyrB chains. In the heterotetramer, GyrA contains the active site tyrosine that forms a transient covalent intermediate with DNA, while GyrB binds cofactors and catalyzes ATP hydrolysis. Requires Mg(2+) as cofactor. Mn(2+) serves as cofactor. Ca(2+) is required as a cofactor.

It is found in the cytoplasm. It carries out the reaction ATP-dependent breakage, passage and rejoining of double-stranded DNA.. Functionally, a type II topoisomerase that negatively supercoils closed circular double-stranded (ds) DNA in an ATP-dependent manner to modulate DNA topology and maintain chromosomes in an underwound state. Negative supercoiling favors strand separation, and DNA replication, transcription, recombination and repair, all of which involve strand separation. Also able to catalyze the interconversion of other topological isomers of dsDNA rings, including catenanes and knotted rings. Type II topoisomerases break and join 2 DNA strands simultaneously in an ATP-dependent manner. This is DNA gyrase subunit B from Staphylococcus aureus (strain USA300).